A 134-amino-acid polypeptide reads, in one-letter code: FK506-binding protein 2 (134 aa).

Residues 1–19 (MRILLLSALFLSLTTLVLS) form the signal peptide. A PPIase FKBP-type domain is found at 39–127 (GDTVHMHYRG…IFETELVQIE (89 aa)). A Prevents secretion from ER motif is present at residues 131–134 (NDEL).

Belongs to the FKBP-type PPIase family. FKBP2 subfamily.

It localises to the endoplasmic reticulum. The enzyme catalyses [protein]-peptidylproline (omega=180) = [protein]-peptidylproline (omega=0). With respect to regulation, inhibited by both FK506 and rapamycin. PPIases accelerate the folding of proteins. It catalyzes the cis-trans isomerization of proline imidic peptide bonds in oligopeptides. The polypeptide is FK506-binding protein 2 (fpr2) (Aspergillus fumigatus (strain ATCC MYA-4609 / CBS 101355 / FGSC A1100 / Af293) (Neosartorya fumigata)).